The chain runs to 107 residues: Phosphoribosyl-ATP pyrophosphatase (107 aa).

This sequence belongs to the PRA-PH family.

The protein resides in the cytoplasm. The catalysed reaction is 1-(5-phospho-beta-D-ribosyl)-ATP + H2O = 1-(5-phospho-beta-D-ribosyl)-5'-AMP + diphosphate + H(+). It functions in the pathway amino-acid biosynthesis; L-histidine biosynthesis; L-histidine from 5-phospho-alpha-D-ribose 1-diphosphate: step 2/9. The sequence is that of Phosphoribosyl-ATP pyrophosphatase from Brucella abortus (strain S19).